Consider the following 904-residue polypeptide: Envelope glycoprotein B (904 aa).

An N-terminal signal peptide occupies residues methionine 1 to alanine 30. The Virion surface segment spans residues alanine 31 to proline 774. A compositionally biased stretch (low complexity) spans proline 32–alanine 52. Residues proline 32–alanine 88 form a disordered region. Asparagine 87 and asparagine 141 each carry an N-linked (GlcNAc...) asparagine; by host glycan. 5 disulfides stabilise this stretch: cysteine 116/cysteine 573, cysteine 133/cysteine 529, cysteine 207/cysteine 271, cysteine 364/cysteine 412, and cysteine 596/cysteine 633. Involved in fusion and/or binding to host membrane regions lie at residues valine 173–tyrosine 179 and arginine 258–tyrosine 265. 2 N-linked (GlcNAc...) asparagine; by host glycosylation sites follow: asparagine 398 and asparagine 430. The tract at residues arginine 470–valine 492 is disordered. The segment covering proline 476–glycine 485 has biased composition (pro residues). Asparagine 489 is a glycosylation site (N-linked (GlcNAc...) asparagine; by host). A glycan (N-linked (GlcNAc...) asparagine; by host) is linked at asparagine 674. A hydrophobic membrane proximal region region spans residues isoleucine 719–serine 772. Residues phenylalanine 775–phenylalanine 795 traverse the membrane as a helical segment. The Intravirion portion of the chain corresponds to arginine 796–leucine 904. The short motif at tyrosine 849 to leucine 852 is the Golgi targeting element. The disordered stretch occupies residues lysine 883–leucine 904. Threonine 887 is subject to Phosphothreonine; by host. Positions tyrosine 889–valine 892 match the Internalization motif motif.

The protein belongs to the herpesviridae glycoprotein B family. Homotrimer; disulfide-linked. Interacts with host receptor MYH9/NMMHC-IIA. Interacts with host receptor MYH10/NMMHC-IIB. Binds to heparan sulfate proteoglycans. Interacts with gH/gL heterodimer. Interacts with the host coreceptor PILRA. Post-translationally, the cytoplasmic tail is phosphorylated by the viral kinase US3. Phosphorylation may be linked to a down-regulation of gB expression on cell surface. In terms of processing, ubiquitinated.

The protein localises to the virion membrane. It is found in the host cell membrane. The protein resides in the host endosome membrane. Its subcellular location is the host Golgi apparatus membrane. In terms of biological role, envelope glycoprotein that forms spikes at the surface of virion envelope and binds to the host cell entry receptors MYH9/NMMHC-IIA and MYH10/NMMHC-IIB, promoting the virus entry into host cells. Essential for the initial attachment to heparan sulfate moieties of the host cell surface proteoglycans. Involved in fusion of viral and cellular membranes leading to virus entry into the host cell: following initial binding to its host cell entry receptors, membrane fusion is mediated by the fusion machinery composed at least of gB and the heterodimer gH/gL. May be involved in the fusion between the virion envelope and the outer nuclear membrane during virion egress. Also plays a role, together with gK, in virus-induced cell-to-cell fusion (syncytia formation). The sequence is that of Envelope glycoprotein B from Human herpesvirus 1 (strain KOS) (HHV-1).